A 61-amino-acid polypeptide reads, in one-letter code: Opistoporin-4 (61 aa).

The propeptide occupies 45–61; the sequence is EAGQMPFDEFMDILHYY.

Belongs to the non-disulfide-bridged peptide (NDBP) superfamily. Long chain multifunctional peptide (group 2) family. Expressed by the venom gland.

Its subcellular location is the secreted. It localises to the target cell membrane. Its function is as follows. At high concentrations, acts as a pore former in cellular membranes and causes the leakage of the cells. At submicromolar concentrations, degranulates granulocytes and has a weak hemolytic activity against human erythrocytes. Also strongly inhibits the production of superoxide anions. Has a strong antibacterial activity against Gram-negative bacteria but is less active against Gram-positive bacteria. Also has antifungal activity. This Opistophthalmus carinatus (African yellow leg scorpion) protein is Opistoporin-4.